The following is a 183-amino-acid chain: Ribosomal RNA small subunit methyltransferase G (183 aa).

S-adenosyl-L-methionine is bound by residues G60, F65, 111–112 (IE), and R125.

It belongs to the methyltransferase superfamily. RNA methyltransferase RsmG family.

The protein resides in the cytoplasm. The catalysed reaction is guanosine(527) in 16S rRNA + S-adenosyl-L-methionine = N(7)-methylguanosine(527) in 16S rRNA + S-adenosyl-L-homocysteine. In terms of biological role, specifically methylates the N7 position of guanine in position 527 of 16S rRNA. The sequence is that of Ribosomal RNA small subunit methyltransferase G from Campylobacter hominis (strain ATCC BAA-381 / DSM 21671 / CCUG 45161 / LMG 19568 / NCTC 13146 / CH001A).